Consider the following 101-residue polypeptide: NAD(P)H-quinone oxidoreductase subunit 4L, chloroplastic (101 aa).

3 helical membrane-spanning segments follow: residues 2-22 (ILEH…YGLI), 32-52 (MCLE…SDFF), and 61-81 (IFSI…LAIV).

It belongs to the complex I subunit 4L family. In terms of assembly, NDH is composed of at least 16 different subunits, 5 of which are encoded in the nucleus.

Its subcellular location is the plastid. The protein localises to the chloroplast thylakoid membrane. It catalyses the reaction a plastoquinone + NADH + (n+1) H(+)(in) = a plastoquinol + NAD(+) + n H(+)(out). It carries out the reaction a plastoquinone + NADPH + (n+1) H(+)(in) = a plastoquinol + NADP(+) + n H(+)(out). Its function is as follows. NDH shuttles electrons from NAD(P)H:plastoquinone, via FMN and iron-sulfur (Fe-S) centers, to quinones in the photosynthetic chain and possibly in a chloroplast respiratory chain. The immediate electron acceptor for the enzyme in this species is believed to be plastoquinone. Couples the redox reaction to proton translocation, and thus conserves the redox energy in a proton gradient. This chain is NAD(P)H-quinone oxidoreductase subunit 4L, chloroplastic, found in Oenothera argillicola (Appalachian evening primrose).